A 377-amino-acid chain; its full sequence is Dihydroorotate dehydrogenase (quinone) (377 aa).

Residues 68–72 (AGFDK) and threonine 92 contribute to the FMN site. Position 72 (lysine 72) interacts with substrate. Residue 117–121 (NRMGF) coordinates substrate. FMN contacts are provided by asparagine 149 and asparagine 182. Asparagine 182 is a substrate binding site. The active-site Nucleophile is serine 185. Residue asparagine 187 coordinates substrate. FMN is bound by residues lysine 224 and threonine 252. 253–254 (NT) is a binding site for substrate. Residues glycine 278, glycine 307, and 328–329 (YT) contribute to the FMN site.

The protein belongs to the dihydroorotate dehydrogenase family. Type 2 subfamily. Monomer. FMN is required as a cofactor.

The protein localises to the cell membrane. The enzyme catalyses (S)-dihydroorotate + a quinone = orotate + a quinol. Its pathway is pyrimidine metabolism; UMP biosynthesis via de novo pathway; orotate from (S)-dihydroorotate (quinone route): step 1/1. In terms of biological role, catalyzes the conversion of dihydroorotate to orotate with quinone as electron acceptor. The chain is Dihydroorotate dehydrogenase (quinone) from Thermobifida fusca (strain YX).